The sequence spans 107 residues: Putative double-stranded DNA mimic protein ETA_15890 (107 aa).

It belongs to the putative dsDNA mimic protein family.

Functionally, may act as a double-stranded DNA (dsDNA) mimic. Probably regulates the activity of a dsDNA-binding protein. This Erwinia tasmaniensis (strain DSM 17950 / CFBP 7177 / CIP 109463 / NCPPB 4357 / Et1/99) protein is Putative double-stranded DNA mimic protein ETA_15890.